Here is a 473-residue protein sequence, read N- to C-terminus: Photosystem II CP43 reaction center protein (473 aa).

Residues 1 to 14 (MKTLYSLRRFYPVE) constitute a propeptide that is removed on maturation. Threonine 15 bears the N-acetylthreonine mark. Threonine 15 is subject to Phosphothreonine. A run of 5 helical transmembrane segments spans residues 69-93 (LFEV…PHLA), 134-155 (LLGP…KDRN), 178-200 (KALY…RRIT), 255-275 (KPFA…LSYS), and 291-312 (WFNN…ASQA). A [CaMn4O5] cluster-binding site is contributed by glutamate 367. The helical transmembrane segment at 447–471 (RARAAAAGFEKGIDRDFEPVLFMTP) threads the bilayer.

This sequence belongs to the PsbB/PsbC family. PsbC subfamily. In terms of assembly, PSII is composed of 1 copy each of membrane proteins PsbA, PsbB, PsbC, PsbD, PsbE, PsbF, PsbH, PsbI, PsbJ, PsbK, PsbL, PsbM, PsbT, PsbX, PsbY, PsbZ, Psb30/Ycf12, at least 3 peripheral proteins of the oxygen-evolving complex and a large number of cofactors. It forms dimeric complexes. Requires Binds multiple chlorophylls and provides some of the ligands for the Ca-4Mn-5O cluster of the oxygen-evolving complex. It may also provide a ligand for a Cl- that is required for oxygen evolution. PSII binds additional chlorophylls, carotenoids and specific lipids. as cofactor.

Its subcellular location is the plastid. The protein localises to the chloroplast thylakoid membrane. Its function is as follows. One of the components of the core complex of photosystem II (PSII). It binds chlorophyll and helps catalyze the primary light-induced photochemical processes of PSII. PSII is a light-driven water:plastoquinone oxidoreductase, using light energy to abstract electrons from H(2)O, generating O(2) and a proton gradient subsequently used for ATP formation. The chain is Photosystem II CP43 reaction center protein from Nuphar advena (Common spatterdock).